The primary structure comprises 320 residues: Cytochrome f (320 aa).

The first 35 residues, 1–35 (MQTRKTLSWIKEEITRSISLSLMLSIITHASLSNA), serve as a signal peptide directing secretion. Residues Tyr-36, Cys-56, Cys-59, and His-60 each coordinate heme. Residues 286–306 (VQGLLFFLTSVLLAQIFLVLK) form a helical membrane-spanning segment.

This sequence belongs to the cytochrome f family. As to quaternary structure, the 4 large subunits of the cytochrome b6-f complex are cytochrome b6, subunit IV (17 kDa polypeptide, petD), cytochrome f and the Rieske protein, while the 4 small subunits are PetG, PetL, PetM and PetN. The complex functions as a dimer. Requires heme as cofactor.

Its subcellular location is the plastid. It localises to the chloroplast thylakoid membrane. Functionally, component of the cytochrome b6-f complex, which mediates electron transfer between photosystem II (PSII) and photosystem I (PSI), cyclic electron flow around PSI, and state transitions. This is Cytochrome f from Pelargonium hortorum (Common geranium).